A 144-amino-acid chain; its full sequence is Na(+)/H(+) antiporter subunit B (144 aa).

The next 4 membrane-spanning stretches (helical) occupy residues 9 to 31 (VLLH…YLFF), 41 to 58 (FIGG…YLGF), 75 to 97 (IAFG…DPYL), and 117 to 139 (ALPF…ILTI).

Belongs to the CPA3 antiporters (TC 2.A.63) subunit B family. Forms a heterooligomeric complex that consists of seven subunits: MrpA, MrpB, MrpC, MrpD, MrpE, MrpF and MrpG.

The protein localises to the cell membrane. Functionally, mnh complex is a Na(+)Li(+)/H(+) antiporter involved in Na(+) and/or Li(+) excretion and Na(+) resistance. Na(+)/H(+) antiport consumes a transmembrane electrical potential, and is thus inferred to be electrogenic. Does not transport K(+), Ca(2+) or Mg(2+). The polypeptide is Na(+)/H(+) antiporter subunit B (mrpB) (Alkalihalophilus pseudofirmus (strain ATCC BAA-2126 / JCM 17055 / OF4) (Bacillus pseudofirmus)).